The sequence spans 544 residues: Chaperonin GroEL (544 aa).

ATP-binding positions include 29 to 32 (TLGP), Lys50, 86 to 90 (DGTTT), Gly413, 479 to 481 (DAA), and Asp495.

Belongs to the chaperonin (HSP60) family. As to quaternary structure, forms a cylinder of 14 subunits composed of two heptameric rings stacked back-to-back. Interacts with the co-chaperonin GroES.

It is found in the cytoplasm. The enzyme catalyses ATP + H2O + a folded polypeptide = ADP + phosphate + an unfolded polypeptide.. Its function is as follows. Together with its co-chaperonin GroES, plays an essential role in assisting protein folding. The GroEL-GroES system forms a nano-cage that allows encapsulation of the non-native substrate proteins and provides a physical environment optimized to promote and accelerate protein folding. In Borrelia duttonii (strain Ly), this protein is Chaperonin GroEL.